The sequence spans 368 residues: Cytochrome b (368 aa).

The next 4 helical transmembrane spans lie at 33–53 (FGSLLGLCLITQILTGIFLAM), 77–99 (WLIRSIHANSASMFFICIYTHTG), 112–132 (TWMVGVTLLLITILTAFLGYV), and 178–198 (FYALHFLFPFLISALSLMHII). Residues His-83 and His-97 each contribute to the heme b site. Residues His-182 and His-196 each contribute to the heme b site. His-201 is a binding site for a ubiquinone. 4 consecutive transmembrane segments (helical) span residues 224-244 (FSAKDLIGVILLWIMLGSVVL), 288-308 (LGGVLALIMSIAILYFLPMMN), 323-343 (IAFWLLVTNFIVLMWIGSKPV), and 345-365 (SPFEEIGQIMTVTYFSIYMIM).

The protein belongs to the cytochrome b family. In terms of assembly, the main subunits of complex b-c1 are: cytochrome b, cytochrome c1 and the Rieske protein. Heme b serves as cofactor.

Its subcellular location is the mitochondrion inner membrane. Functionally, component of the ubiquinol-cytochrome c reductase complex (complex III or cytochrome b-c1 complex) that is part of the mitochondrial respiratory chain. The b-c1 complex mediates electron transfer from ubiquinol to cytochrome c. Contributes to the generation of a proton gradient across the mitochondrial membrane that is then used for ATP synthesis. This chain is Cytochrome b (mt:Cyt-b), found in Bugula neritina (Brown bryozoan).